A 295-amino-acid chain; its full sequence is Protease HtpX (295 aa).

2 helical membrane passes run 4–24 and 42–62; these read ILLF…TLSL and QLLI…LFIS. His147 lines the Zn(2+) pocket. Glu148 is a catalytic residue. Residue His151 participates in Zn(2+) binding. A run of 2 helical transmembrane segments spans residues 158 to 178 and 199 to 219; these read VTLA…ARII and VATI…VMWF. Position 224 (Glu224) interacts with Zn(2+).

The protein belongs to the peptidase M48B family. It depends on Zn(2+) as a cofactor.

The protein resides in the cell inner membrane. This Pseudomonas fluorescens (strain ATCC BAA-477 / NRRL B-23932 / Pf-5) protein is Protease HtpX.